Here is a 342-residue protein sequence, read N- to C-terminus: Methionyl-tRNA formyltransferase (342 aa).

108-111 (SLLP) lines the (6S)-5,6,7,8-tetrahydrofolate pocket.

Belongs to the Fmt family.

The enzyme catalyses L-methionyl-tRNA(fMet) + (6R)-10-formyltetrahydrofolate = N-formyl-L-methionyl-tRNA(fMet) + (6S)-5,6,7,8-tetrahydrofolate + H(+). Its function is as follows. Attaches a formyl group to the free amino group of methionyl-tRNA(fMet). The formyl group appears to play a dual role in the initiator identity of N-formylmethionyl-tRNA by promoting its recognition by IF2 and preventing the misappropriation of this tRNA by the elongation apparatus. The protein is Methionyl-tRNA formyltransferase of Prochlorococcus marinus (strain MIT 9303).